Reading from the N-terminus, the 453-residue chain is MLACLQRTQNPPGQHLACPSKSLDLRKCESVASSMHSSRYPSPAELDAYAEKVANSPLSIKIFPTNIRVPQHKHLSRTVNGYDTSGQRYSPYPQHTAGYQGLLAIVKAAVSSSAHAPAGHPKSVLKSVEGKRTKLSPATVQVGIAPYPVPSTLGPLAYPKPPEAPAPPPSLPAAATATSVIPLPGRGLPLPPSNLPSIHSILYQLNQQCQAPGAAPSACQGVAVPHPSPAKHGPVPSFPNLAYSATAGLPDCRKGTELSQGATPALTLAGATKPAGYAEGGLDYLLWPQKPPPPPPQPLRAYSSSTVAGKSQSPEICGGRAFERANGSPHNCGMGLPGSFTVGQYFAAPWNSVLVTPTSDCYNPAAAAVVTELAPGAARELAGPPGDVLSGLTSKSVCNTAVLSSSLQSLEYLINDIRPPCIKEQMLGKGYETVAVPRLLDHQHAHIRLPVYR.

This sequence belongs to the FAM222 family.

In Mus musculus (Mouse), this protein is Protein FAM222A (Fam222a).